The primary structure comprises 449 residues: Aspartate aminotransferase 3, chloroplastic (449 aa).

The N-terminal 43 residues, 1–43 (MKTTHFSSSSSSDRRIGALLRHLNSGSDSDNLSSLYASPTSGG), are a transit peptide targeting the chloroplast. L-aspartate-binding residues include G81, W178, and N231. Residue K295 is modified to N6-(pyridoxal phosphate)lysine. R423 is an L-aspartate binding site.

It belongs to the class-I pyridoxal-phosphate-dependent aminotransferase family. As to quaternary structure, homodimer. It depends on pyridoxal 5'-phosphate as a cofactor. Expressed in roots, cauline leaves, flowers, hypocotyl epidermis and root hair cells.

It is found in the plastid. Its subcellular location is the chloroplast. The catalysed reaction is L-aspartate + 2-oxoglutarate = oxaloacetate + L-glutamate. Its function is as follows. Amino acid aminotransferase important for the metabolism of amino acids and Krebs-cycle related organic acids. No activity with D-Asp or D-Ala as amino donors. In plants, it is involved in nitrogen metabolism and in aspects of carbon and energy metabolism. The polypeptide is Aspartate aminotransferase 3, chloroplastic (ASP3) (Arabidopsis thaliana (Mouse-ear cress)).